The sequence spans 210 residues: ATP-dependent Clp protease proteolytic subunit (210 aa).

Ser-107 acts as the Nucleophile in catalysis. His-132 is a catalytic residue.

This sequence belongs to the peptidase S14 family. As to quaternary structure, fourteen ClpP subunits assemble into 2 heptameric rings which stack back to back to give a disk-like structure with a central cavity, resembling the structure of eukaryotic proteasomes.

It localises to the cytoplasm. It catalyses the reaction Hydrolysis of proteins to small peptides in the presence of ATP and magnesium. alpha-casein is the usual test substrate. In the absence of ATP, only oligopeptides shorter than five residues are hydrolyzed (such as succinyl-Leu-Tyr-|-NHMec, and Leu-Tyr-Leu-|-Tyr-Trp, in which cleavage of the -Tyr-|-Leu- and -Tyr-|-Trp bonds also occurs).. Its function is as follows. Cleaves peptides in various proteins in a process that requires ATP hydrolysis. Has a chymotrypsin-like activity. Plays a major role in the degradation of misfolded proteins. The chain is ATP-dependent Clp protease proteolytic subunit from Cereibacter sphaeroides (strain ATCC 17029 / ATH 2.4.9) (Rhodobacter sphaeroides).